Reading from the N-terminus, the 284-residue chain is Orotidine 5'-phosphate decarboxylase (284 aa).

The active-site Proton donor is Lys-95.

The protein belongs to the OMP decarboxylase family. Type 2 subfamily.

It carries out the reaction orotidine 5'-phosphate + H(+) = UMP + CO2. It functions in the pathway pyrimidine metabolism; UMP biosynthesis via de novo pathway; UMP from orotate: step 2/2. The polypeptide is Orotidine 5'-phosphate decarboxylase (Leptothrix cholodnii (strain ATCC 51168 / LMG 8142 / SP-6) (Leptothrix discophora (strain SP-6))).